Here is a 433-residue protein sequence, read N- to C-terminus: Protein translocase subunit SecY (433 aa).

The next 10 membrane-spanning stretches (helical) occupy residues 17–37 (IVFT…PIPG), 71–91 (IFAL…LMSV), 117–137 (LTVL…ESIV), 141–161 (GPVV…TLVV), 184–204 (LIIF…MFEL), 212–232 (PLIA…IIFF), 268–288 (GVIP…LANF), 310–330 (YILL…AIVF), 366–386 (LTVI…LLMN), and 388–408 (YVIS…VVLD).

The protein belongs to the SecY/SEC61-alpha family. In terms of assembly, component of the Sec protein translocase complex. Heterotrimer consisting of SecY, SecE and SecG subunits. The heterotrimers can form oligomers, although 1 heterotrimer is thought to be able to translocate proteins. Interacts with the ribosome. Interacts with SecDF, and other proteins may be involved. Interacts with SecA.

It localises to the cell inner membrane. Its function is as follows. The central subunit of the protein translocation channel SecYEG. Consists of two halves formed by TMs 1-5 and 6-10. These two domains form a lateral gate at the front which open onto the bilayer between TMs 2 and 7, and are clamped together by SecE at the back. The channel is closed by both a pore ring composed of hydrophobic SecY resides and a short helix (helix 2A) on the extracellular side of the membrane which forms a plug. The plug probably moves laterally to allow the channel to open. The ring and the pore may move independently. This is Protein translocase subunit SecY from Rickettsia felis (strain ATCC VR-1525 / URRWXCal2) (Rickettsia azadi).